Consider the following 153-residue polypeptide: Riboflavin synthase (153 aa).

It belongs to the DMRL synthase family. In terms of assembly, homooligomer. The cofactor is Mg(2+).

It carries out the reaction 2 6,7-dimethyl-8-(1-D-ribityl)lumazine + H(+) = 5-amino-6-(D-ribitylamino)uracil + riboflavin. Its pathway is cofactor biosynthesis; riboflavin biosynthesis; riboflavin from 2-hydroxy-3-oxobutyl phosphate and 5-amino-6-(D-ribitylamino)uracil: step 2/2. Inhibited by EDTA. The relatively low activity of this enzyme suggested that 6,7-dimethyl-8-ribityllumazine might not be its natural substrate. The chain is Riboflavin synthase (ribC) from Methanothermobacter marburgensis (strain ATCC BAA-927 / DSM 2133 / JCM 14651 / NBRC 100331 / OCM 82 / Marburg) (Methanobacterium thermoautotrophicum).